The primary structure comprises 245 residues: 5'-nucleotidase SurE (245 aa).

4 residues coordinate a divalent metal cation: aspartate 8, aspartate 9, serine 39, and asparagine 91.

The protein belongs to the SurE nucleotidase family. The cofactor is a divalent metal cation.

The protein resides in the cytoplasm. The enzyme catalyses a ribonucleoside 5'-phosphate + H2O = a ribonucleoside + phosphate. In terms of biological role, nucleotidase that shows phosphatase activity on nucleoside 5'-monophosphates. The sequence is that of 5'-nucleotidase SurE from Janthinobacterium sp. (strain Marseille) (Minibacterium massiliensis).